A 324-amino-acid chain; its full sequence is Lactonase drp35 (324 aa).

10 residues coordinate Ca(2+): E47, S109, G111, D129, T132, Y134, D137, N184, D235, and S236. Residue D235 is the Proton donor of the active site.

Belongs to the SMP-30/CGR1 family. Requires Ca(2+) as cofactor.

Its subcellular location is the cytoplasm. Exhibits lactonase activity. Acts in cells with perturbed membrane integrity and is possibly related to the membrane homeostasis. The sequence is that of Lactonase drp35 (drp35) from Staphylococcus saprophyticus subsp. saprophyticus (strain ATCC 15305 / DSM 20229 / NCIMB 8711 / NCTC 7292 / S-41).